The following is a 146-amino-acid chain: Hemoglobin subunit beta (146 aa).

Residues 2 to 146 (HWTAEEKSAI…VAHALAHQYH (145 aa)) form the Globin domain. Residues His63 and His92 each coordinate heme b.

It belongs to the globin family. As to quaternary structure, heterotetramer of two alpha chains and two beta chains. Oxygenation results in dissociation to dimers. As to expression, red blood cells.

In terms of biological role, involved in oxygen transport from the lung to the various peripheral tissues. The protein is Hemoglobin subunit beta (HBB) of Erythrolamprus miliaris (South American water snake).